The chain runs to 283 residues: Acetylglutamate kinase (283 aa).

Substrate contacts are provided by residues 63–64 (GG), Arg85, and Asn178.

The protein belongs to the acetylglutamate kinase family. ArgB subfamily.

The protein localises to the cytoplasm. The enzyme catalyses N-acetyl-L-glutamate + ATP = N-acetyl-L-glutamyl 5-phosphate + ADP. The protein operates within amino-acid biosynthesis; L-arginine biosynthesis; N(2)-acetyl-L-ornithine from L-glutamate: step 2/4. In terms of biological role, catalyzes the ATP-dependent phosphorylation of N-acetyl-L-glutamate. The chain is Acetylglutamate kinase from Prochlorococcus marinus (strain MIT 9312).